The following is a 312-amino-acid chain: Olfactory receptor 10P22 (312 aa).

At 1–26 the chain is on the extracellular side; that stretch reads MGDDNDTDITEFILLGFSGYGFLQGH. The N-linked (GlcNAc...) asparagine glycan is linked to asparagine 5. Residues 27–47 form a helical membrane-spanning segment; that stretch reads LFWGVLCIYVVTLLGNSLIVL. At 48-57 the chain is on the cytoplasmic side; sequence LTLADSALHS. A helical transmembrane segment spans residues 58 to 78; the sequence is PMYFFLRHFSVVEILYTTTIV. Over 79-89 the chain is Extracellular; the sequence is PRMLADLRSSC. Residues 90–110 form a helical membrane-spanning segment; it reads PTIPLASCFTQLYFFALFGIA. The Cytoplasmic segment spans residues 111-143; that stretch reads ECCLLTAMAYDRYAAICCPLHYTTLMSQGTYTG. The chain crosses the membrane as a helical span at residues 144–164; the sequence is LVGASYLAGVISGTTHSIFIF. The Extracellular segment spans residues 165-205; sequence TLPFRGAKTIHHFLCDILPVLRLATASTFWGEVGNLFVTIT. A helical transmembrane segment spans residues 206-226; that stretch reads FIFVPFLLIVASYACILVTIL. Residues 227-236 are Cytoplasmic-facing; sequence GVATSQGRQK. Residues 237–257 form a helical membrane-spanning segment; the sequence is LFSTCSSHLFVVILFFGTATV. Residues 258–271 lie on the Extracellular side of the membrane; sequence AYMRPQADSFGNTD. Residues 272–292 traverse the membrane as a helical segment; it reads QILTLVYTVVTPMCNPFVYSL. The Cytoplasmic segment spans residues 293 to 312; it reads RNKEVTGAMRRLMKRYLWGP.

Belongs to the G-protein coupled receptor 1 family.

It localises to the cell membrane. Odorant receptor. The protein is Olfactory receptor 10P22 of Mus musculus (Mouse).